Reading from the N-terminus, the 861-residue chain is MAEILLTSVINKSVEIAGNLLIQEGKRLYWLKEDIDWLQREMRHIRSYVDNAKAKEAGGDSRVKNLLKDIQELAGDVEDLLDDFLPKIQRSNKFNYCLKTSSFADEFAMEIEKIKRRVVDIDRIRKTYNIIDTDNNNDDCVLLDRRRLFLHADETEIIGLDDDFNMLQAKLLNQDLHYGVVSIVGMPGLGKTTLAKKLYRLIRDQFECSGLVYVSQQPRAGEILLDIAKQIGLTEQKIKENLEDNLRSLLKIKRYVILLDDIWDVEIWDDLKLVLPECDSKVGSRMIITSRNSNVGRYIGGESSLHALQPLESEKSFELFTKKIFNFDDNNSWANASPDLVNIGRNIAGRCGGIPLAIVVTAGMLRARERTEHAWNRVLESMGHKVQDGCAKVLALSYNDLPIASRPCFLYFSLYPEDHEIRAFDLINMWIAEKFIVVNSGNRREAEDLAEDVLNDLVSRNLIQLAKRTYNGRISSCRIHDLLHSLCVDLAKESNFFHTAHDVFGDPGNVARLRRITFYSDNVMIEFFGSNPKLEKLRVLFCFTKDPSIFSHMACFDFKLLHTLVVVMSQSFQAYVTIPSKFGNMTCLRYLKLEGNICGKLPNSIVKLTRLETIDIDRRSLIQLPSGVWESKHLRHLCYRDYGQACNSCFSISSFYPNIYSLHPNNLQTLMWIPDKFFEPRLLHRLINLRKLGILGVSNSTVKILSTCRPVPKALKVLKLRFFSDPSEQINLSSYPKIVKLHLNVDRTIALNSEAFPPNIIKLTLVCFMVDSCLLAVLKTLPKLRKLKMVICKYNEEKMALSGEANGYSFPQLEVLHIHSPNGLSEVTCTDDVSMPKLKKLLLTGFHCGISLSERLKKLSK.

Positions 63–83 form a coiled coil; it reads VKNLLKDIQELAGDVEDLLDD. One can recognise an NB-ARC domain in the interval 162–388; the sequence is DDFNMLQAKL…LESMGHKVQD (227 aa). Residue 185-192 participates in ATP binding; sequence GMPGLGKT. LRR repeat units lie at residues 225 to 248, 305 to 327, 388 to 411, 449 to 472, 510 to 536, 585 to 608, 609 to 631, 652 to 680, 689 to 713, 735 to 758, 781 to 804, and 810 to 835; these read LDIAKQIGLTEQKIKENLEDNLRS, LHALQPLESEKSFELFTKKIFNF, DGCAKVLALSYNDLPIASRPCFLY, LAEDVLNDLVSRNLIQLAKRTYNG, VARLRRITFYSDNVMIEFFGSNPKLEK, MTCLRYLKLEGNICGKLPNSIVKL, TRLETIDIDRRSLIQLPSGVWES, ISSFYPNIYSLHPNNLQTLMWIPDKFFEP, LRKLGILGVSNSTVKILSTCRPVPK, YPKIVKLHLNVDRTIALNSEAFPP, LPKLRKLKMVICKYNEEKMALSGE, and FPQLEVLHIHSPNGLSEVTCTDDVSM.

It belongs to the disease resistance NB-LRR family. As to quaternary structure, (Microbial infection) Fails to interact with the tobamovirus mouvement protein of tobacco mosaic virus (TMV).

It is found in the cell membrane. Potential inhibitor of viral mouvements which may confer resistance to some tobamoviruses but not to the tomato mosaic virus (ToMV) and tobacco mosaic virus (TMV). This is ToMV susceptible protein tm-2 from Solanum lycopersicum (Tomato).